Here is a 617-residue protein sequence, read N- to C-terminus: Protein DWARF AND LOW-TILLERING (617 aa).

Disordered regions lie at residues 29–92 (KRGS…HDED) and 159–206 (PSLA…GVPA). The span at 171 to 187 (KSPSDSSSSSGTDGGSS) shows a compositional bias: low complexity. The GRAS domain occupies 208–594 (GQAEREALEL…QPLYTVTAWT (387 aa)). Positions 215–295 (LELVRALTAC…LTDDAFGGGD (81 aa)) are leucine repeat I (LRI). The tract at residues 301-366 (LRILNAITPI…VPPAHVRITG (66 aa)) is VHIID. The VHIID motif lies at 332–336 (VHVID). Residues 376–408 (ETGARLARVAAALGLAFEFHAVVDRLEDVRLWM) are leucine repeat II (LRII). Residues 417–508 (VAVNCVLAMH…EEMFAREIRN (92 aa)) form a PFYRE region. Residues 511-594 (AFEGPERFER…QPLYTVTAWT (84 aa)) are SAW. Positions 596–617 (AGDGAGGSTVSASTTASHSQQS) are disordered. The segment covering 603–617 (STVSASTTASHSQQS) has biased composition (low complexity).

It belongs to the GRAS family. Interacts with GSK2. Interacts with SMOS1 (via C-terminus). In terms of processing, phosphorylated on serine and threonine residues by GSK2. Dephosphorylated during response to brassinosteroid. Expressed in the shoot apical meristem (SAM) and elongating cells of young seedlings. Expressed in leaf joints, culms, internodes, stems, young panicles, primary roots and lateral roots.

It is found in the nucleus. Its function is as follows. Probable transcription factor that acts as a positive regulator of brassinosteroid (BR) signaling. Functions downstream of BRI1 and GSK2 to modulate BR responses. Acts as a direct target of GSK2 kinase to mediate BR responses. Involved in feedback inhibition of BR biosynthetic genes. Repressed by BZR1. Cooperatively functions in a transactivating complex with SMOS1 to enhance the transcription of the SMOS1 target PHI-1, and regulate plant organ size. Interaction between SMOS1 and DLT is a crosstalk point for auxin and brassinosteroid signaling. The protein is Protein DWARF AND LOW-TILLERING of Oryza sativa subsp. japonica (Rice).